Reading from the N-terminus, the 120-residue chain is Ribosome-binding factor A (120 aa).

The protein belongs to the RbfA family. Monomer. Binds 30S ribosomal subunits, but not 50S ribosomal subunits or 70S ribosomes.

Its subcellular location is the cytoplasm. Its function is as follows. One of several proteins that assist in the late maturation steps of the functional core of the 30S ribosomal subunit. Associates with free 30S ribosomal subunits (but not with 30S subunits that are part of 70S ribosomes or polysomes). Required for efficient processing of 16S rRNA. May interact with the 5'-terminal helix region of 16S rRNA. This is Ribosome-binding factor A from Clostridium botulinum (strain 657 / Type Ba4).